The chain runs to 332 residues: Ketol-acid reductoisomerase (NADP(+)) (332 aa).

Positions M1 to T182 constitute a KARI N-terminal Rossmann domain. NADP(+)-binding positions include Y25 to Q28, K49, S51, and D83 to Q86. Residue H108 is part of the active site. G134 lines the NADP(+) pocket. One can recognise a KARI C-terminal knotted domain in the interval T183–L328. The Mg(2+) site is built by D191, E195, E227, and E231. S252 provides a ligand contact to substrate.

Belongs to the ketol-acid reductoisomerase family. Mg(2+) serves as cofactor.

The catalysed reaction is (2R)-2,3-dihydroxy-3-methylbutanoate + NADP(+) = (2S)-2-acetolactate + NADPH + H(+). It catalyses the reaction (2R,3R)-2,3-dihydroxy-3-methylpentanoate + NADP(+) = (S)-2-ethyl-2-hydroxy-3-oxobutanoate + NADPH + H(+). It functions in the pathway amino-acid biosynthesis; L-isoleucine biosynthesis; L-isoleucine from 2-oxobutanoate: step 2/4. The protein operates within amino-acid biosynthesis; L-valine biosynthesis; L-valine from pyruvate: step 2/4. Its function is as follows. Involved in the biosynthesis of branched-chain amino acids (BCAA). Catalyzes an alkyl-migration followed by a ketol-acid reduction of (S)-2-acetolactate (S2AL) to yield (R)-2,3-dihydroxy-isovalerate. In the isomerase reaction, S2AL is rearranged via a Mg-dependent methyl migration to produce 3-hydroxy-3-methyl-2-ketobutyrate (HMKB). In the reductase reaction, this 2-ketoacid undergoes a metal-dependent reduction by NADPH to yield (R)-2,3-dihydroxy-isovalerate. The polypeptide is Ketol-acid reductoisomerase (NADP(+)) (Methanothrix thermoacetophila (strain DSM 6194 / JCM 14653 / NBRC 101360 / PT) (Methanosaeta thermophila)).